The sequence spans 59 residues: Large ribosomal subunit protein uL30 (59 aa).

It belongs to the universal ribosomal protein uL30 family. As to quaternary structure, part of the 50S ribosomal subunit.

This Syntrophotalea carbinolica (strain DSM 2380 / NBRC 103641 / GraBd1) (Pelobacter carbinolicus) protein is Large ribosomal subunit protein uL30.